The primary structure comprises 135 residues: MSAKPNYETMYILRPDIAEEEVESHANKYRDLVVEAGGEVIDSQMRGKRRLAYNIGKHREGIYIQLNYSGDGKQVGPLEKAMRLSEDVIRYLTVKYEGQHSSLGRSTAPANPMASNTPRTEGQEQAKTEPQTAPA.

Polar residues predominate over residues 99–120; sequence QHSSLGRSTAPANPMASNTPRT. The tract at residues 99 to 135 is disordered; it reads QHSSLGRSTAPANPMASNTPRTEGQEQAKTEPQTAPA.

This sequence belongs to the bacterial ribosomal protein bS6 family.

Binds together with bS18 to 16S ribosomal RNA. The chain is Small ribosomal subunit protein bS6 from Synechococcus sp. (strain RCC307).